The chain runs to 113 residues: uncharacterized protein (113 aa).

The protein to M.jannaschii MJ0886 C-terminal region.

This is an uncharacterized protein from Clostridium pasteurianum.